The sequence spans 338 residues: Ketol-acid reductoisomerase (NADP(+)) (338 aa).

One can recognise a KARI N-terminal Rossmann domain in the interval 1 to 181 (MKVFYDKDAD…GGGKAGIIET (181 aa)). NADP(+)-binding positions include 24 to 27 (YGSQ), Arg-47, and Ser-52. The active site involves His-107. Gly-133 serves as a coordination point for NADP(+). A KARI C-terminal knotted domain is found at 182 to 327 (NFREETETDL…EKLRAMMPWI (146 aa)). Mg(2+)-binding residues include Asp-190, Glu-194, Glu-226, and Glu-230. Ser-251 serves as a coordination point for substrate.

Belongs to the ketol-acid reductoisomerase family. Mg(2+) is required as a cofactor.

It carries out the reaction (2R)-2,3-dihydroxy-3-methylbutanoate + NADP(+) = (2S)-2-acetolactate + NADPH + H(+). It catalyses the reaction (2R,3R)-2,3-dihydroxy-3-methylpentanoate + NADP(+) = (S)-2-ethyl-2-hydroxy-3-oxobutanoate + NADPH + H(+). It participates in amino-acid biosynthesis; L-isoleucine biosynthesis; L-isoleucine from 2-oxobutanoate: step 2/4. The protein operates within amino-acid biosynthesis; L-valine biosynthesis; L-valine from pyruvate: step 2/4. Its function is as follows. Involved in the biosynthesis of branched-chain amino acids (BCAA). Catalyzes an alkyl-migration followed by a ketol-acid reduction of (S)-2-acetolactate (S2AL) to yield (R)-2,3-dihydroxy-isovalerate. In the isomerase reaction, S2AL is rearranged via a Mg-dependent methyl migration to produce 3-hydroxy-3-methyl-2-ketobutyrate (HMKB). In the reductase reaction, this 2-ketoacid undergoes a metal-dependent reduction by NADPH to yield (R)-2,3-dihydroxy-isovalerate. The protein is Ketol-acid reductoisomerase (NADP(+)) of Leptothrix cholodnii (strain ATCC 51168 / LMG 8142 / SP-6) (Leptothrix discophora (strain SP-6)).